The sequence spans 83 residues: Short neurotoxin 1 (83 aa).

A signal peptide spans 1–21 (MKTLLLTLVVVTIVCLDLGYT). 4 cysteine pairs are disulfide-bonded: C24-C45, C38-C62, C64-C75, and C76-C81.

It belongs to the three-finger toxin family. Short-chain subfamily. Type I alpha-neurotoxin sub-subfamily. In terms of tissue distribution, expressed by the venom gland.

The protein localises to the secreted. Functionally, binds to muscle nicotinic acetylcholine receptor (nAChR) and inhibit acetylcholine from binding to the receptor, thereby impairing neuromuscular transmission. This Oxyuranus scutellatus scutellatus (Australian taipan) protein is Short neurotoxin 1.